Consider the following 273-residue polypeptide: Shikimate dehydrogenase (NADP(+)) (273 aa).

Residues 15 to 17 (SLS) and threonine 62 contribute to the shikimate site. Catalysis depends on lysine 66, which acts as the Proton acceptor. An NADP(+)-binding site is contributed by glutamate 78. Positions 87 and 102 each coordinate shikimate. Residues 126–130 (GAGGA), 149–154 (NRTPER), isoleucine 215, and glycine 238 each bind NADP(+).

The protein belongs to the shikimate dehydrogenase family. Homodimer.

The catalysed reaction is shikimate + NADP(+) = 3-dehydroshikimate + NADPH + H(+). Its pathway is metabolic intermediate biosynthesis; chorismate biosynthesis; chorismate from D-erythrose 4-phosphate and phosphoenolpyruvate: step 4/7. Involved in the biosynthesis of the chorismate, which leads to the biosynthesis of aromatic amino acids. Catalyzes the reversible NADPH linked reduction of 3-dehydroshikimate (DHSA) to yield shikimate (SA). This is Shikimate dehydrogenase (NADP(+)) from Desulfitobacterium hafniense (strain Y51).